Here is a 141-residue protein sequence, read N- to C-terminus: Protein NrdI (141 aa).

It belongs to the NrdI family.

Functionally, probably involved in ribonucleotide reductase function. This is Protein NrdI from Bifidobacterium animalis subsp. lactis (strain AD011).